The following is a 289-amino-acid chain: Formamidopyrimidine-DNA glycosylase (289 aa).

Catalysis depends on P2, which acts as the Schiff-base intermediate with DNA. E3 functions as the Proton donor in the catalytic mechanism. K61 functions as the Proton donor; for beta-elimination activity in the catalytic mechanism. Residues H97, R119, and K168 each coordinate DNA. The segment at 254–288 adopts an FPG-type zinc-finger fold; that stretch reads NAYGRAGKPCPRCGEPIVRVQWTNRSSHFCPQCQS. R278 (proton donor; for delta-elimination activity) is an active-site residue.

It belongs to the FPG family. As to quaternary structure, monomer. The cofactor is Zn(2+).

The enzyme catalyses Hydrolysis of DNA containing ring-opened 7-methylguanine residues, releasing 2,6-diamino-4-hydroxy-5-(N-methyl)formamidopyrimidine.. It carries out the reaction 2'-deoxyribonucleotide-(2'-deoxyribose 5'-phosphate)-2'-deoxyribonucleotide-DNA = a 3'-end 2'-deoxyribonucleotide-(2,3-dehydro-2,3-deoxyribose 5'-phosphate)-DNA + a 5'-end 5'-phospho-2'-deoxyribonucleoside-DNA + H(+). In terms of biological role, involved in base excision repair of DNA damaged by oxidation or by mutagenic agents. Acts as a DNA glycosylase that recognizes and removes damaged bases. Has a preference for oxidized purines, such as 7,8-dihydro-8-oxoguanine (8-oxoG). Has AP (apurinic/apyrimidinic) lyase activity and introduces nicks in the DNA strand. Cleaves the DNA backbone by beta-delta elimination to generate a single-strand break at the site of the removed base with both 3'- and 5'-phosphates. The polypeptide is Formamidopyrimidine-DNA glycosylase (Corynebacterium urealyticum (strain ATCC 43042 / DSM 7109)).